The sequence spans 366 residues: Chorismate synthase (366 aa).

Arg48 and Arg54 together coordinate NADP(+). FMN contacts are provided by residues 125-127 (RSS), 238-239 (NA), Gly278, 293-297 (KPTSS), and Arg319.

The protein belongs to the chorismate synthase family. Homotetramer. FMNH2 serves as cofactor.

It catalyses the reaction 5-O-(1-carboxyvinyl)-3-phosphoshikimate = chorismate + phosphate. It functions in the pathway metabolic intermediate biosynthesis; chorismate biosynthesis; chorismate from D-erythrose 4-phosphate and phosphoenolpyruvate: step 7/7. Its function is as follows. Catalyzes the anti-1,4-elimination of the C-3 phosphate and the C-6 proR hydrogen from 5-enolpyruvylshikimate-3-phosphate (EPSP) to yield chorismate, which is the branch point compound that serves as the starting substrate for the three terminal pathways of aromatic amino acid biosynthesis. This reaction introduces a second double bond into the aromatic ring system. The polypeptide is Chorismate synthase (Burkholderia cenocepacia (strain HI2424)).